The primary structure comprises 312 residues: Zinc-finger homeodomain protein 9 (312 aa).

The interval 1-27 is disordered; the sequence is MLEVRSMDMTPKSPEPESETPTRIQPA. A Phosphoserine modification is found at Ser13. Residues 52-103 form a ZF-HD dimerization-type; degenerate zinc finger; the sequence is YKECLKNHAAAIGGHALDGCGEFMPSPSSTPSDPTSLKCAACGCHRNFHRRE. Disordered stretches follow at residues 128 to 155 and 253 to 312; these read QPHHRHHPPPPLAPPLPRSPNSSSPPPI and FSGG…SSSS. The span at 136 to 155 shows a compositional bias: pro residues; the sequence is PPPLAPPLPRSPNSSSPPPI. Residues 192-255 constitute a DNA-binding region (homeobox); the sequence is RKRFRTKFSS…NNKNSFKFSG (64 aa). Ser273 bears the Phosphoserine mark.

Homo- and heterodimer with other ZFHD proteins. Interacts with MIF3; this interaction prevents nuclear localization and DNA-binding to inhibit transcription regulation activity. Binds to ZHD1, ZHD2 and ZHD11. As to expression, mostly expressed in flowers, stems and inflorescence and, to a lower extent, in leaves and stems.

The protein localises to the nucleus. Putative transcription factor. This chain is Zinc-finger homeodomain protein 9 (ZHD9), found in Arabidopsis thaliana (Mouse-ear cress).